Here is a 1085-residue protein sequence, read N- to C-terminus: SLIT-ROBO Rho GTPase-activating protein 1 (1085 aa).

An F-BAR domain is found at 19-314; that stretch reads SQVKEIRAQL…AVDNLEPRSD (296 aa). A coiled-coil region spans residues 351-390; sequence VQAELMLRYQQLQSRLATLKIENEEVKKTTEATLQTIQDM. Serine 416 carries the post-translational modification Phosphoserine. Positions 475–496 are disordered; sequence YMTTRPPNVPPKPQKHRKSRPR. The region spanning 506–694 is the Rho-GAP domain; the sequence is GDLETFVKDS…TIIIHHETIF (189 aa). The region spanning 743-802 is the SH3 domain; sequence CEPIEAIAKFDYVGRSARELSFKKGASLLLYHRASEDWWEGRHNGIDGLVPHQYIVVQDM. Residues 808–822 show a composition bias toward polar residues; that stretch reads DTLSQKADSEASSGP. The segment at 808–954 is disordered; it reads DTLSQKADSE…TGFNDHKPLD (147 aa). Phosphoserine occurs at positions 835 and 917. Basic and acidic residues predominate over residues 922–931; it reads SRHDSLKKID. Residue serine 932 is modified to Phosphoserine. Residues 937-946 are compositionally biased toward polar residues; the sequence is RSTSSGQYTG. A coiled-coil region spans residues 956–985; sequence ETIAQDIEETMNTALNELRELERQSTAKHA. The segment covering 997 to 1011 has biased composition (polar residues); that stretch reads KNSPTPATSTESLSP. Disordered stretches follow at residues 997-1038 and 1051-1085; these read KNSP…MSTF and KPPA…SCTM. Position 999 is a phosphoserine (serine 999). A Phosphothreonine modification is found at threonine 1001. Residues 1027–1037 are compositionally biased toward low complexity; sequence STSSSSDTMST. The residue at position 1032 (serine 1032) is a Phosphoserine.

In terms of assembly, homodimer. Forms a heterooligomer with SRGAP2 and SRGAP3 through its F-BAR domain. Interacts with ROBO1, CDC42 and RHOA. Interacts with FASLG. Expressed in brain, lung, kidney, and testis.

GTPase-activating protein for RhoA and Cdc42 small GTPases. Together with CDC42 seems to be involved in the pathway mediating the repulsive signaling of Robo and Slit proteins in neuronal migration. SLIT2, probably through interaction with ROBO1, increases the interaction of SRGAP1 with ROBO1 and inactivates CDC42. This Homo sapiens (Human) protein is SLIT-ROBO Rho GTPase-activating protein 1 (SRGAP1).